We begin with the raw amino-acid sequence, 301 residues long: GTPase Era (301 aa).

One can recognise an Era-type G domain in the interval Lys8–Glu174. The tract at residues Gly16–Ser23 is G1. Position 16-23 (Gly16–Ser23) interacts with GTP. Residues Gln42 to Asn46 form a G2 region. Residues Asp63 to Gly66 are G3. Residues Asp63 to Ile67 and Asn124 to Asp127 contribute to the GTP site. A G4 region spans residues Asn124 to Asp127. A G5 region spans residues Ile153–Ala155. The KH type-2 domain occupies Ile197 to Arg282.

The protein belongs to the TRAFAC class TrmE-Era-EngA-EngB-Septin-like GTPase superfamily. Era GTPase family. As to quaternary structure, monomer.

It is found in the cytoplasm. It localises to the cell membrane. Functionally, an essential GTPase that binds both GDP and GTP, with rapid nucleotide exchange. Plays a role in 16S rRNA processing and 30S ribosomal subunit biogenesis and possibly also in cell cycle regulation and energy metabolism. The chain is GTPase Era from Lactobacillus delbrueckii subsp. bulgaricus (strain ATCC 11842 / DSM 20081 / BCRC 10696 / JCM 1002 / NBRC 13953 / NCIMB 11778 / NCTC 12712 / WDCM 00102 / Lb 14).